The chain runs to 652 residues: Large subunit GTPase 1 homolog (652 aa).

Ser93 bears the Phosphoserine mark. Residues 164 to 438 (WRQLWRVIER…LCDCPGLVMP (275 aa)) form the CP-type G domain. A GTP-binding site is contributed by 212–215 (NKAD). Ser252 carries the phosphoserine modification. Positions 288-347 (LGEAASSEEDESEYEDCQEEEEDWQTCLEDSSSSDEEACGQDCKEGHTVDSEAQGRNTPQ) are disordered. Residues 293-311 (SSEEDESEYEDCQEEEEDW) show a composition bias toward acidic residues. GTP-binding positions include 387–394 (GYPNVGKS) and 431–434 (DCPG). Positions 625–652 (RGAGKPWKKHGNRNKKEKSRRLYKHLDM) are disordered. The segment covering 630–652 (PWKKHGNRNKKEKSRRLYKHLDM) has biased composition (basic residues).

The protein belongs to the TRAFAC class YlqF/YawG GTPase family. LSG1 subfamily.

The protein resides in the cytoplasm. It is found in the endoplasmic reticulum. Its subcellular location is the nucleus. The protein localises to the cajal body. The catalysed reaction is GTP + H2O = GDP + phosphate + H(+). Functionally, functions as a GTPase. May act by mediating the release of NMD3 from the 60S ribosomal subunit after export into the cytoplasm during the 60S ribosomal subunit maturation. This is Large subunit GTPase 1 homolog from Bos taurus (Bovine).